The primary structure comprises 355 residues: Ornithine transcarbamylase, mitochondrial (355 aa).

The transit peptide at 1–35 (MLFINLRTLLNNAALRNGHNFVVRNFRCGQPVQDK) directs the protein to the mitochondrion. Lys71 bears the N6-acetyllysine; alternate mark. Lys71 bears the N6-succinyllysine; alternate mark. The residue at position 81 (Lys81) is an N6-succinyllysine. N6-acetyllysine; alternate is present on Lys89. An N6-succinyllysine; alternate modification is found at Lys89. Residue 91 to 95 (STRTR) coordinates carbamoyl phosphate. At Ser134 the chain carries Phosphoserine. Arg142 provides a ligand contact to carbamoyl phosphate. Position 142 (Arg142) interacts with L-ornithine. An N6-acetyllysine; alternate modification is found at Lys145. Lys145 carries the N6-succinyllysine; alternate modification. Position 169 (His169) interacts with carbamoyl phosphate. L-ornithine is bound at residue Asn200. N6-acetyllysine; alternate occurs at positions 222, 232, and 239. N6-succinyllysine; alternate occurs at positions 222, 232, and 239. N6-acetyllysine is present on Lys244. 264 to 268 (DTWIS) serves as a coordination point for L-ornithine. N6-succinyllysine is present on residues Lys275 and Lys290. Lys293 is modified (N6-acetyllysine; alternate). Position 293 is an N6-succinyllysine; alternate (Lys293). 303-306 (HCLP) serves as a coordination point for L-ornithine. The active site involves Cys304. Lys308 is subject to N6-acetyllysine; alternate. Lys308 carries the post-translational modification N6-succinyllysine; alternate. Arg331 contacts carbamoyl phosphate. Residue Arg331 coordinates L-ornithine.

The protein belongs to the aspartate/ornithine carbamoyltransferase superfamily. OTCase family. Homotrimer. In terms of processing, acetylation at Lys-89 negatively regulates ornithine carbamoyltransferase activity in response to nutrient signals.

It localises to the mitochondrion matrix. It carries out the reaction carbamoyl phosphate + L-ornithine = L-citrulline + phosphate + H(+). Its pathway is nitrogen metabolism; urea cycle; L-citrulline from L-ornithine and carbamoyl phosphate: step 1/1. Negatively regulated by lysine acetylation. Functionally, catalyzes the second step of the urea cycle, the condensation of carbamoyl phosphate with L-ornithine to form L-citrulline. The urea cycle ensures the detoxification of ammonia by converting it to urea for excretion. The sequence is that of Ornithine transcarbamylase, mitochondrial from Ovis aries (Sheep).